Here is a 437-residue protein sequence, read N- to C-terminus: Branched-chain amino acid transport system 3 carrier protein (437 aa).

12 consecutive transmembrane segments (helical) span residues 9 to 29 (ILAL…IIFP), 40 to 60 (VWLA…ITVI), 79 to 99 (YAGG…FAIP), 120 to 140 (ALFV…LYPG), 155 to 175 (ILAL…PIGT), 189 to 209 (FVNG…IVIV), 226 to 246 (YAIV…VSLF), 277 to 297 (LGSS…AVGL), 316 to 336 (LVII…TKLI), 342 to 362 (VLTA…CIGL), 369 to 389 (ILAP…LKAA), and 399 to 419 (LLHL…VATL).

This sequence belongs to the branched chain amino acid transporter family.

Its subcellular location is the cell inner membrane. In terms of biological role, component of the LIV-III transport system for branched-chain amino acids. BraZ is specific for isoleucine and valine. The LIV-III transport system may be H(+)-coupled. This Pseudomonas aeruginosa (strain ATCC 15692 / DSM 22644 / CIP 104116 / JCM 14847 / LMG 12228 / 1C / PRS 101 / PAO1) protein is Branched-chain amino acid transport system 3 carrier protein (braZ).